Consider the following 341-residue polypeptide: Methionine import ATP-binding protein MetN (341 aa).

Positions 6-247 constitute an ABC transporter domain; it reads IEIKKLSKNF…PQHQATRHLL (242 aa). 44 to 51 is a binding site for ATP; it reads GMSGAGKS.

This sequence belongs to the ABC transporter superfamily. Methionine importer (TC 3.A.1.24) family. The complex is composed of two ATP-binding proteins (MetN), two transmembrane proteins (MetI) and a solute-binding protein (MetQ).

The protein resides in the cell inner membrane. It catalyses the reaction L-methionine(out) + ATP + H2O = L-methionine(in) + ADP + phosphate + H(+). The enzyme catalyses D-methionine(out) + ATP + H2O = D-methionine(in) + ADP + phosphate + H(+). Its function is as follows. Part of the ABC transporter complex MetNIQ involved in methionine import. Responsible for energy coupling to the transport system. This Protochlamydia amoebophila (strain UWE25) protein is Methionine import ATP-binding protein MetN.